Consider the following 148-residue polypeptide: Probable calcium-binding protein CML7 (148 aa).

3 consecutive EF-hand domains span residues 9-44 (EQVA…LGGN), 80-115 (PFDR…IGEK), and 116-148 (LEPH…IVAK). Asp-22, Asp-24, Asp-26, Arg-28, Glu-33, Asp-93, Asp-95, Ser-97, Thr-99, and Asp-104 together coordinate Ca(2+).

Its function is as follows. Potential calcium sensor. The protein is Probable calcium-binding protein CML7 (CML7) of Oryza sativa subsp. japonica (Rice).